We begin with the raw amino-acid sequence, 284 residues long: MRINGHTRMAAVVAKPIKHSISPLIHNMAFEKTGVNGVYLAWEVEAKDLQASIENIRRYDMFGVNLSMPYKQEVIPYLDELDVSARLIGAVNTVVNKNGILVGYNTDGKGFFKSLPSFAIRGKKMTILGAGGAATAIIAQAALYNAEEIFVFTRQASYEKIVSKMAAISHQTKSRIQVLTLEDADSLQDKINQSDLLVNGTSLGMDGVSMPLPEQLELPSQILVADVIYQPFETPFLKWARNQNVTAVNGLGMLLYQGAEAFELWTGKPMPSQEIWQCLEELYK.

Shikimate-binding positions include 20–22 (SIS) and serine 67. Lysine 71 serves as the catalytic Proton acceptor. Shikimate contacts are provided by asparagine 92 and aspartate 107. Residues 129–133 (GAGGA) and valine 227 contribute to the NADP(+) site. Tyrosine 229 is a shikimate binding site. Glycine 250 is an NADP(+) binding site.

This sequence belongs to the shikimate dehydrogenase family. As to quaternary structure, homodimer.

The enzyme catalyses shikimate + NADP(+) = 3-dehydroshikimate + NADPH + H(+). The protein operates within metabolic intermediate biosynthesis; chorismate biosynthesis; chorismate from D-erythrose 4-phosphate and phosphoenolpyruvate: step 4/7. Involved in the biosynthesis of the chorismate, which leads to the biosynthesis of aromatic amino acids. Catalyzes the reversible NADPH linked reduction of 3-dehydroshikimate (DHSA) to yield shikimate (SA). The protein is Shikimate dehydrogenase (NADP(+)) of Streptococcus sanguinis (strain SK36).